The chain runs to 438 residues: Minor myo-inositol transporter IolF (438 aa).

12 helical membrane-spanning segments follow: residues 15–35, 49–69, 86–106, 108–128, 147–167, 171–191, 230–250, 268–288, 295–312, 317–334, 359–379, and 387–407; these read IAAALANYIDAGSIVAGSAGL, IGLLGALSANAISAAVGALLG, MLVYALGICLVLFGVNFPMLL, GYIIIGLSVGADITASWTIIA, WAAGAVVVLLLSVLAGDLGLL, IVFAHLLVIALITYILRIRLP, ILFLMGVYLVWNLAAGVMGFF, LLQMGLFIFTGLGVALIFMPF, TVFGIAAFMAVIGWTLFL, GLPILLLFIVVIGINNGA, LMFFLVRISIGIWSLFVPMII, and MAAILLGCVTASMIIGLLFAP.

Belongs to the major facilitator superfamily. Sugar transporter (TC 2.A.1.1) family.

The protein resides in the cell membrane. The protein operates within polyol metabolism; myo-inositol degradation into acetyl-CoA. Minor myo-inositol uptake transporter. This Bacillus subtilis (strain 168) protein is Minor myo-inositol transporter IolF (iolF).